Reading from the N-terminus, the 424-residue chain is Serine hydroxymethyltransferase (424 aa).

(6S)-5,6,7,8-tetrahydrofolate is bound by residues L123 and 127–129 (GHL). An N6-(pyridoxal phosphate)lysine modification is found at K232. E245 contacts (6S)-5,6,7,8-tetrahydrofolate.

The protein belongs to the SHMT family. In terms of assembly, homodimer. Pyridoxal 5'-phosphate serves as cofactor.

It is found in the cytoplasm. It carries out the reaction (6R)-5,10-methylene-5,6,7,8-tetrahydrofolate + glycine + H2O = (6S)-5,6,7,8-tetrahydrofolate + L-serine. The protein operates within one-carbon metabolism; tetrahydrofolate interconversion. It functions in the pathway amino-acid biosynthesis; glycine biosynthesis; glycine from L-serine: step 1/1. Catalyzes the reversible interconversion of serine and glycine with tetrahydrofolate (THF) serving as the one-carbon carrier. This reaction serves as the major source of one-carbon groups required for the biosynthesis of purines, thymidylate, methionine, and other important biomolecules. Also exhibits THF-independent aldolase activity toward beta-hydroxyamino acids, producing glycine and aldehydes, via a retro-aldol mechanism. The sequence is that of Serine hydroxymethyltransferase from Kocuria rhizophila (strain ATCC 9341 / DSM 348 / NBRC 103217 / DC2201).